The following is a 127-amino-acid chain: Large ribosomal subunit protein eL18 (127 aa).

The protein belongs to the eukaryotic ribosomal protein eL18 family.

In Methanopyrus kandleri (strain AV19 / DSM 6324 / JCM 9639 / NBRC 100938), this protein is Large ribosomal subunit protein eL18.